Reading from the N-terminus, the 180-residue chain is GTP cyclohydrolase 1 (180 aa).

C71, H74, and C142 together coordinate Zn(2+).

This sequence belongs to the GTP cyclohydrolase I family. As to quaternary structure, toroid-shaped homodecamer, composed of two pentamers of five dimers.

The enzyme catalyses GTP + H2O = 7,8-dihydroneopterin 3'-triphosphate + formate + H(+). The protein operates within cofactor biosynthesis; 7,8-dihydroneopterin triphosphate biosynthesis; 7,8-dihydroneopterin triphosphate from GTP: step 1/1. The chain is GTP cyclohydrolase 1 from Helicobacter pylori (strain HPAG1).